We begin with the raw amino-acid sequence, 104 residues long: Iron-sulfur cluster assembly protein CyaY (104 aa).

The protein belongs to the frataxin family.

Involved in iron-sulfur (Fe-S) cluster assembly. May act as a regulator of Fe-S biogenesis. This is Iron-sulfur cluster assembly protein CyaY from Aliivibrio fischeri (strain MJ11) (Vibrio fischeri).